The following is a 49-amino-acid chain: uncharacterized protein (49 aa).

The chain crosses the membrane as a helical span at residues 20 to 42 (LFLVGLTIGKMATSRILSFLGFI).

It is found in the membrane. This is an uncharacterized protein from Dictyostelium discoideum (Social amoeba).